We begin with the raw amino-acid sequence, 174 residues long: Larval cuticle protein A1A (174 aa).

Repeat copies occupy residues 45–48 (AAPV) and 67–70 (AAPV). Positions 84-150 (NPQYSFGYDV…AVVHREPLVA (67 aa)) constitute a Chitin-binding type R&amp;R domain. Copy 3 of the repeat occupies 155 to 158 (AAPA).

In terms of biological role, component of the cuticle of the larva of Tenebrio molitor. The chain is Larval cuticle protein A1A from Tenebrio molitor (Yellow mealworm beetle).